Reading from the N-terminus, the 223-residue chain is NLP effector protein 3 (223 aa).

Residues 90-100 (AIMYVWYFPKD) carry the Conserved undecapeptide motif motif. Positions 107–113 (GHRHDWE) match the Conserved heptapeptide motif motif.

Belongs to the Necrosis inducing protein (NPP1) family.

Its subcellular location is the secreted. It is found in the host cytoplasm. In terms of biological role, probable secreted effector that may act as a pathogen-associated molecular pattern (PAMP) recognized by the plant immune system. Seems not to induce necrosis, neither in several susceptible or resistant Vitis species nor in the dicot model plant Nicotiana benthamiana. The chain is NLP effector protein 3 from Plasmopara viticola (Downy mildew of grapevine).